The chain runs to 188 residues: V-type ATP synthase subunit E (188 aa).

This sequence belongs to the V-ATPase E subunit family.

Produces ATP from ADP in the presence of a proton gradient across the membrane. This Thermus thermophilus (strain ATCC BAA-163 / DSM 7039 / HB27) protein is V-type ATP synthase subunit E.